An 812-amino-acid chain; its full sequence is cAMP-regulated phosphoprotein 21 (812 aa).

Residues 1–130 (MSEQGDLNQA…KDKTSEKPKI (130 aa)) are disordered. Residue Ser-2 is modified to N-acetylserine. Residues 9–25 (QAIAEEGGTEQETATPE) show a composition bias toward low complexity. The stretch at 32 to 58 (ESLDEEEKLELQRRLEAQNQERRKSKS) forms a coiled coil. Ser-33 carries the phosphoserine modification. Basic and acidic residues predominate over residues 40–53 (LELQRRLEAQNQER). At Ser-56 the chain carries Phosphoserine. Positions 90 to 100 (IHLQLSSFSSL) are enriched in low complexity. Positions 102–130 (EEDKSRKDDSEREKEKDKNKDKTSEKPKI) are enriched in basic and acidic residues. Ser-134 carries the post-translational modification Phosphoserine. In terms of domain architecture, R3H spans 164–227 (RMILLKMEQE…SVIINKTSST (64 aa)). The SUZ domain occupies 228-300 (RIPEQRFCEH…VRERIFAHDS (73 aa)). Residues 246-281 (SQKRFILKRDNSSIDKEDNQQNRMHPFRDDRRSKSI) are disordered. A Phosphoserine modification is found at Ser-300. Disordered regions lie at residues 332 to 436 (RGNR…PLVS), 485 to 544 (HTGQ…MAGP), and 561 to 632 (LSRQ…QQPP). A compositionally biased stretch (low complexity) spans 339 to 349 (GRTSGSRQSSS). Over residues 351–360 (NELKWSDHQR) the composition is skewed to basic and acidic residues. Residues 361 to 373 (AWSSTDSDSSNRN) show a composition bias toward polar residues. Residues Ser-363 and Ser-383 each carry the phosphoserine modification. A compositionally biased stretch (low complexity) spans 391–423 (TRGDSTSSTRSTGKLSKAGSESSSSAGSSGSLS). Ser-562 is subject to Phosphoserine. The span at 582 to 602 (LMPQPAQQPSYVIASTGQQLP) shows a compositional bias: polar residues. Over residues 619–632 (QPPPSPQGFVQQPP) the composition is skewed to pro residues. At Arg-655 the chain carries Asymmetric dimethylarginine.

Interacts with CALM1. In terms of processing, phosphorylation at Ser-56 favors interaction with CALM1. Post-translationally, isoform 1 is methylated by CARM1 at Arg-655 in immature thymocytes. In terms of tissue distribution, isoform 2 is expressed in brain. Isoform 1 is present in immature thymocytes (at protein level).

The protein resides in the cytoplasm. In terms of biological role, isoform 2 may act as a competitive inhibitor of calmodulin-dependent enzymes such as calcineurin in neurons. The sequence is that of cAMP-regulated phosphoprotein 21 (ARPP21) from Homo sapiens (Human).